We begin with the raw amino-acid sequence, 55 residues long: MVSKSTIDPEVIEKIISSLETLDFGTVQITVHDSQITQIEKIEKHRFSLKRKESK.

This is an uncharacterized protein from Bacillus subtilis (strain 168).